A 427-amino-acid polypeptide reads, in one-letter code: Serine--tRNA ligase (427 aa).

L-serine is bound at residue 231–233 (TAE). 262-264 (RSE) lines the ATP pocket. Residue Glu-285 participates in L-serine binding. 349 to 352 (EISS) provides a ligand contact to ATP. An L-serine-binding site is contributed by Ser-385.

Belongs to the class-II aminoacyl-tRNA synthetase family. Type-1 seryl-tRNA synthetase subfamily. In terms of assembly, homodimer. The tRNA molecule binds across the dimer.

It is found in the cytoplasm. It catalyses the reaction tRNA(Ser) + L-serine + ATP = L-seryl-tRNA(Ser) + AMP + diphosphate + H(+). It carries out the reaction tRNA(Sec) + L-serine + ATP = L-seryl-tRNA(Sec) + AMP + diphosphate + H(+). Its pathway is aminoacyl-tRNA biosynthesis; selenocysteinyl-tRNA(Sec) biosynthesis; L-seryl-tRNA(Sec) from L-serine and tRNA(Sec): step 1/1. In terms of biological role, catalyzes the attachment of serine to tRNA(Ser). Is also able to aminoacylate tRNA(Sec) with serine, to form the misacylated tRNA L-seryl-tRNA(Sec), which will be further converted into selenocysteinyl-tRNA(Sec). The polypeptide is Serine--tRNA ligase (Hahella chejuensis (strain KCTC 2396)).